Here is a 179-residue protein sequence, read N- to C-terminus: Large ribosomal subunit protein uL5 (179 aa).

Belongs to the universal ribosomal protein uL5 family. As to quaternary structure, part of the 50S ribosomal subunit; part of the 5S rRNA/L5/L18/L25 subcomplex. Contacts the 5S rRNA and the P site tRNA. Forms a bridge to the 30S subunit in the 70S ribosome.

This is one of the proteins that bind and probably mediate the attachment of the 5S RNA into the large ribosomal subunit, where it forms part of the central protuberance. In the 70S ribosome it contacts protein S13 of the 30S subunit (bridge B1b), connecting the 2 subunits; this bridge is implicated in subunit movement. Contacts the P site tRNA; the 5S rRNA and some of its associated proteins might help stabilize positioning of ribosome-bound tRNAs. This chain is Large ribosomal subunit protein uL5, found in Ectopseudomonas mendocina (strain ymp) (Pseudomonas mendocina).